A 354-amino-acid chain; its full sequence is tRNase Z TRZ2, chloroplastic (354 aa).

The disordered stretch occupies residues 1 to 21; the sequence is MQLSSSFPISPPKIFPSTKHH. Residues 1–68 constitute a chloroplast transit peptide; it reads MQLSSSFPIS…EEEEEYRKAR (68 aa).

This sequence belongs to the RNase Z family. In terms of assembly, homodimer. Zn(2+) is required as a cofactor. Requires Ca(2+) as cofactor. The cofactor is Mn(2+). It depends on Mg(2+) as a cofactor. Highly expressed in green and actively dividing tissues.

It is found in the plastid. It localises to the chloroplast. It carries out the reaction Endonucleolytic cleavage of RNA, removing extra 3' nucleotides from tRNA precursor, generating 3' termini of tRNAs. A 3'-hydroxy group is left at the tRNA terminus and a 5'-phosphoryl group is left at the trailer molecule.. Its function is as follows. Zinc phosphodiesterase, which displays tRNA 3'-processing endonuclease activity. Involved in tRNA maturation, by removing a 3'-trailer from precursor tRNA. This Arabidopsis thaliana (Mouse-ear cress) protein is tRNase Z TRZ2, chloroplastic.